Consider the following 272-residue polypeptide: Large ribosomal subunit protein uL2 (272 aa).

Residues 247–272 (PWGQPCKGFKTRNNKRTNSSIIKRRK) form a disordered region. A compositionally biased stretch (polar residues) spans 262–272 (RTNSSIIKRRK).

Belongs to the universal ribosomal protein uL2 family. As to quaternary structure, part of the 50S ribosomal subunit. Forms a bridge to the 30S subunit in the 70S ribosome.

Functionally, one of the primary rRNA binding proteins. Required for association of the 30S and 50S subunits to form the 70S ribosome, for tRNA binding and peptide bond formation. It has been suggested to have peptidyltransferase activity; this is somewhat controversial. Makes several contacts with the 16S rRNA in the 70S ribosome. The chain is Large ribosomal subunit protein uL2 from Bdellovibrio bacteriovorus (strain ATCC 15356 / DSM 50701 / NCIMB 9529 / HD100).